Reading from the N-terminus, the 100-residue chain is Large ribosomal subunit protein uL23 (100 aa).

Belongs to the universal ribosomal protein uL23 family. In terms of assembly, part of the 50S ribosomal subunit. Contacts protein L29, and trigger factor when it is bound to the ribosome.

Functionally, one of the early assembly proteins it binds 23S rRNA. One of the proteins that surrounds the polypeptide exit tunnel on the outside of the ribosome. Forms the main docking site for trigger factor binding to the ribosome. The sequence is that of Large ribosomal subunit protein uL23 from Edwardsiella ictaluri (strain 93-146).